A 104-amino-acid polypeptide reads, in one-letter code: Turripeptide OL55-like (104 aa).

Post-translationally, contains 8 disulfide bonds. As to expression, expressed by the venom duct.

Its subcellular location is the secreted. Functionally, acts as a neurotoxin by inhibiting an ion channel. The protein is Turripeptide OL55-like of Iotyrris cingulifera (Sea snail).